Reading from the N-terminus, the 337-residue chain is Glyceraldehyde-3-phosphate dehydrogenase (337 aa).

NAD(+)-binding positions include 12–13 (RI), D34, and K79. Residues 150 to 152 (SCT), T181, 210 to 211 (TG), and R233 each bind D-glyceraldehyde 3-phosphate. The active-site Nucleophile is C151. Position 315 (N315) interacts with NAD(+).

Belongs to the glyceraldehyde-3-phosphate dehydrogenase family. In terms of assembly, homotetramer. Expressed in all tissues examined.

The protein resides in the cytoplasm. It carries out the reaction D-glyceraldehyde 3-phosphate + phosphate + NAD(+) = (2R)-3-phospho-glyceroyl phosphate + NADH + H(+). The protein operates within carbohydrate degradation; glycolysis; pyruvate from D-glyceraldehyde 3-phosphate: step 1/5. This Lentinula edodes (Shiitake mushroom) protein is Glyceraldehyde-3-phosphate dehydrogenase (gpd).